A 358-amino-acid chain; its full sequence is DnaJ homolog subfamily B member 11 (358 aa).

The first 22 residues, 1 to 22 (MAPQNLGTLCLLLLYLLGAAIA), serve as a signal peptide directing secretion. The J domain maps to 25-90 (DFYKILGVPR…EKRKQYDTYG (66 aa)). At threonine 188 the chain carries Phosphothreonine. N-linked (GlcNAc...) asparagine glycosylation is present at asparagine 261.

In terms of assembly, part of a large chaperone multiprotein complex comprising DNAJB11, HSP90B1, HSPA5, HYOU, PDIA2, PDIA4, PDIA6, PPIB, SDF2L1, UGGT1 and very small amounts of ERP29, but not, or at very low levels, CALR nor CANX. Binds to denatured substrates in an ATP-independent manner. Interacts via the J domain with HSPA5 in an ATP-dependent manner. Post-translationally, contains high-mannose Endo H-sensitive carbohydrates. Cys-169, Cys-171, Cys-193 and Cys-196 form intramolecular disulfide bonds. The preferential partner for each Cys is not known. As to expression, pancreas.

It is found in the endoplasmic reticulum lumen. Its function is as follows. As a co-chaperone for HSPA5 it is required for proper folding, trafficking or degradation of proteins. Binds directly to both unfolded proteins that are substrates for ERAD and nascent unfolded peptide chains, but dissociates from the HSPA5-unfolded protein complex before folding is completed. May help recruiting HSPA5 and other chaperones to the substrate. Stimulates HSPA5 ATPase activity. It is necessary for maturation and correct trafficking of PKD1. In Canis lupus familiaris (Dog), this protein is DnaJ homolog subfamily B member 11 (DNAJB11).